A 291-amino-acid chain; its full sequence is Bifunctional protein FolD (291 aa).

NADP(+) contacts are provided by residues 168–170 (GRG), Thr-195, and Val-236.

Belongs to the tetrahydrofolate dehydrogenase/cyclohydrolase family. In terms of assembly, homodimer.

The catalysed reaction is (6R)-5,10-methylene-5,6,7,8-tetrahydrofolate + NADP(+) = (6R)-5,10-methenyltetrahydrofolate + NADPH. It carries out the reaction (6R)-5,10-methenyltetrahydrofolate + H2O = (6R)-10-formyltetrahydrofolate + H(+). The protein operates within one-carbon metabolism; tetrahydrofolate interconversion. Catalyzes the oxidation of 5,10-methylenetetrahydrofolate to 5,10-methenyltetrahydrofolate and then the hydrolysis of 5,10-methenyltetrahydrofolate to 10-formyltetrahydrofolate. The polypeptide is Bifunctional protein FolD (Bifidobacterium longum (strain DJO10A)).